The sequence spans 399 residues: 1-deoxy-D-xylulose 5-phosphate reductoisomerase (399 aa).

NADPH-binding residues include T16, G17, S18, I19, G42, R43, N44, and N127. Residue K128 coordinates 1-deoxy-D-xylulose 5-phosphate. Residue E129 participates in NADPH binding. D153 is a Mn(2+) binding site. Residues S154, E155, S179, and H202 each coordinate 1-deoxy-D-xylulose 5-phosphate. E155 is a Mn(2+) binding site. G208 serves as a coordination point for NADPH. 1-deoxy-D-xylulose 5-phosphate-binding residues include S215, N220, K221, and E224. Residue E224 participates in Mn(2+) binding.

Belongs to the DXR family. The cofactor is Mg(2+). Requires Mn(2+) as cofactor.

The enzyme catalyses 2-C-methyl-D-erythritol 4-phosphate + NADP(+) = 1-deoxy-D-xylulose 5-phosphate + NADPH + H(+). Its pathway is isoprenoid biosynthesis; isopentenyl diphosphate biosynthesis via DXP pathway; isopentenyl diphosphate from 1-deoxy-D-xylulose 5-phosphate: step 1/6. Catalyzes the NADPH-dependent rearrangement and reduction of 1-deoxy-D-xylulose-5-phosphate (DXP) to 2-C-methyl-D-erythritol 4-phosphate (MEP). This is 1-deoxy-D-xylulose 5-phosphate reductoisomerase from Caulobacter vibrioides (strain NA1000 / CB15N) (Caulobacter crescentus).